The sequence spans 312 residues: Ribosomal RNA small subunit methyltransferase H (312 aa).

Residues 35 to 37, Asp55, Phe79, Asp101, and Gln108 contribute to the S-adenosyl-L-methionine site; that span reads GGH. The disordered stretch occupies residues 286–306; the sequence is LKPSEHEVNENSRSRSSVLRV. Residues 287–298 show a composition bias toward basic and acidic residues; the sequence is KPSEHEVNENSR.

The protein belongs to the methyltransferase superfamily. RsmH family.

It is found in the cytoplasm. The catalysed reaction is cytidine(1402) in 16S rRNA + S-adenosyl-L-methionine = N(4)-methylcytidine(1402) in 16S rRNA + S-adenosyl-L-homocysteine + H(+). Its function is as follows. Specifically methylates the N4 position of cytidine in position 1402 (C1402) of 16S rRNA. The protein is Ribosomal RNA small subunit methyltransferase H of Aeromonas hydrophila subsp. hydrophila (strain ATCC 7966 / DSM 30187 / BCRC 13018 / CCUG 14551 / JCM 1027 / KCTC 2358 / NCIMB 9240 / NCTC 8049).